Here is a 218-residue protein sequence, read N- to C-terminus: Trimethylamine corrinoid protein 2 (218 aa).

Residues Met1–Lys92 enclose the B12-binding N-terminal domain. The region spanning Leu94–Gly218 is the B12-binding domain. Position 107 (His107) interacts with methylcob(III)alamin.

The protein belongs to the methylamine corrinoid protein family. In terms of assembly, can form a complex with MttB.

It functions in the pathway one-carbon metabolism; methanogenesis from trimethylamine. Acts probably as a methyl group carrier between MttB and either MtbA or MtaA. The sequence is that of Trimethylamine corrinoid protein 2 (mttC2) from Methanosarcina mazei (strain ATCC BAA-159 / DSM 3647 / Goe1 / Go1 / JCM 11833 / OCM 88) (Methanosarcina frisia).